A 173-amino-acid chain; its full sequence is DASH complex subunit SPC19 (173 aa).

This sequence belongs to the DASH complex SPC19 family. As to quaternary structure, component of the DASH complex consisting of ASK1, DAD1, DAD2, DAD3, DAD4, DAM1, DUO1, HSK3, SPC19 and SPC34, with a stoichiometry of one copy of each subunit per complex. Multiple DASH complexes oligomerize to form a ring that encircles spindle microtubules and organizes the rod-like NDC80 complexes of the outer kinetochore. DASH complex oligomerization strengthens microtubule attachments. On cytoplasmic microtubules, DASH complexes appear to form patches instead of rings.

The protein localises to the nucleus. The protein resides in the cytoplasm. It is found in the cytoskeleton. Its subcellular location is the spindle. It localises to the chromosome. The protein localises to the centromere. The protein resides in the kinetochore. In terms of biological role, component of the DASH complex that connects microtubules with kinetochores and couples microtubule depolymerisation to chromosome movement; it is involved in retrieving kinetochores to the spindle poles before their re-orientation on the spindle in early mitosis and allows microtubule depolymerization to pull chromosomes apart and resist detachment during anaphase. Kinetochores, consisting of a centromere-associated inner segment and a microtubule-contacting outer segment, play a crucial role in chromosome segregation by mediating the physical connection between centromeric DNA and microtubules. Kinetochores also serve as an input point for the spindle assembly checkpoint, which delays anaphase until all chromosomes have bioriented on the mitotic spindle. This is DASH complex subunit SPC19 from Chaetomium thermophilum (strain DSM 1495 / CBS 144.50 / IMI 039719) (Thermochaetoides thermophila).